The following is a 310-amino-acid chain: MNNVILQELKNIVSTERVTCNEPLSKHTSFKIGGPADYFVITKKIEETAAVIQCCNQHNLPLLMIGKGSNLLISDAGIRGVVLKQEDNTEGFFVTQCEEGYLVTGGAGMNLSAFAMKIANESLTGFEFAAGIPGSLGGAVYMNAGAYGGEIKDCIKSARVLTKEGQILSLNREELELSYRSSIIQKKGYYVIDATFLLQKGNQEDILRKIEELNQARKDKQPLEYPSAGSTFKRPEGYFAGKLIMDAGLRGYRVGGAMVSEKHCGFVINTGDATAKDVLQLIDDVRRIVKEKFGVTLEPEVRLIGEKVNP.

One can recognise an FAD-binding PCMH-type domain in the interval 31–216 (KIGGPADYFV…LRKIEELNQA (186 aa)). Arginine 180 is a catalytic residue. Serine 230 functions as the Proton donor in the catalytic mechanism. The active site involves glutamate 300.

The protein belongs to the MurB family. FAD is required as a cofactor.

The protein localises to the cytoplasm. The enzyme catalyses UDP-N-acetyl-alpha-D-muramate + NADP(+) = UDP-N-acetyl-3-O-(1-carboxyvinyl)-alpha-D-glucosamine + NADPH + H(+). It participates in cell wall biogenesis; peptidoglycan biosynthesis. Cell wall formation. This chain is UDP-N-acetylenolpyruvoylglucosamine reductase, found in Lachnoclostridium phytofermentans (strain ATCC 700394 / DSM 18823 / ISDg) (Clostridium phytofermentans).